We begin with the raw amino-acid sequence, 35 residues long: uncharacterized protein (35 aa).

A helical transmembrane segment spans residues 10-30 (LMITASFFAIFIIIVVSVLLL).

It is found in the membrane. This is an uncharacterized protein from Salmonella typhimurium (strain LT2 / SGSC1412 / ATCC 700720).